The sequence spans 3390 residues: Genome polyprotein (3390 aa).

The interaction with host EXOC1 stretch occupies residues 1–15 (MNNQRKKTGKPSINM). Over 1–100 (MNNQRKKTGK…MLSIINQRKK (100 aa)) the chain is Cytoplasmic. The hydrophobic; homodimerization of capsid protein C stretch occupies residues 37 to 72 (LLNGQGPMKLVMAFIAFLRFLAIPPTAGVLARWGTF). A propeptide spans 101–114 (TSLCLMMILPAALA) (ER anchor for the capsid protein C, removed in mature form by serine protease NS3). The helical transmembrane segment at 101–120 (TSLCLMMILPAALAFHLTSR) threads the bilayer. Over 121–243 (DGEPRMIVGK…VEKVETWALR (123 aa)) the chain is Extracellular. N-linked (GlcNAc...) asparagine; by host glycosylation occurs at asparagine 183. The chain crosses the membrane as a helical span at residues 244 to 264 (HPGFTILALFLAHYIGTSLTQ). A topological domain (cytoplasmic) is located at residue lysine 265. The helical transmembrane segment at 266–280 (VVIFILLMLVTPSMT) threads the bilayer. Residues 281 to 723 (MRCVGVGNRD…VHQIFGSAYT (443 aa)) lie on the Extracellular side of the membrane. Cystine bridges form between cysteine 283–cysteine 310, cysteine 340–cysteine 401, cysteine 354–cysteine 385, and cysteine 372–cysteine 396. The N-linked (GlcNAc...) asparagine; by host glycan is linked to asparagine 347. Residues 378–391 (DRGWGNGCGLFGKG) are fusion peptide. Residue asparagine 433 is glycosylated (N-linked (GlcNAc...) asparagine; by host). 2 disulfide bridges follow: cysteine 463–cysteine 563 and cysteine 580–cysteine 611. Residues 724–744 (ALFSGVSWVMKIGIGVLLTWI) traverse the membrane as a helical segment. At 745–750 (GLNSKN) the chain is on the cytoplasmic side. A helical transmembrane segment spans residues 751-771 (TSMSFSCIAIGIITLYLGAVV). Residues 772-1193 (QADMGCVINW…MIGSNASDRM (422 aa)) lie on the Extracellular side of the membrane. 6 cysteine pairs are disulfide-bonded: cysteine 777/cysteine 788, cysteine 828/cysteine 916, cysteine 952/cysteine 996, cysteine 1053/cysteine 1102, cysteine 1064/cysteine 1086, and cysteine 1085/cysteine 1089. N-linked (GlcNAc...) asparagine; by host glycans are attached at residues asparagine 903 and asparagine 980. Residues asparagine 1132 and asparagine 1188 are each glycosylated (N-linked (GlcNAc...) asparagine; by host). A helical membrane pass occupies residues 1194–1218 (GMGVTYLALIATFKIQPFLALGFFL). Residues 1219 to 1224 (RKLTSR) are Cytoplasmic-facing. A helical membrane pass occupies residues 1225–1243 (ENLLLGVGLAMATTLQLPE). The Lumenal portion of the chain corresponds to 1244 to 1267 (DIEQMANGVALGLMALKLITQFET). A helical membrane pass occupies residues 1268–1288 (YQLWTALVSLTCSNTIFTLTV). Alanine 1289 is a topological domain (cytoplasmic). The chain crosses the membrane as a helical span at residues 1290–1308 (WRTATLILAGVSLLPVCQS). Residues 1309-1315 (SSMRKTD) lie on the Lumenal side of the membrane. A helical transmembrane segment spans residues 1316 to 1336 (WLPMTVAAMGVPPLPLFIFSL). Topologically, residues 1337 to 1344 (KDTLKRRS) are cytoplasmic. The chain crosses the membrane as a helical span at residues 1345–1365 (WPLNEGVMAVGLVSILASSLL). Residues 1366-1368 (RND) lie on the Lumenal side of the membrane. The chain crosses the membrane as a helical span at residues 1369-1389 (VPMAGPLVAGGLLIACYVITG). The Cytoplasmic segment spans residues 1390-1443 (TSADLTVEKAPDVTWEEEAEQTGVSHNLMITVDDDGTMRIKDDETENILTVLLK). Residues 1396–1435 (VEKAPDVTWEEEAEQTGVSHNLMITVDDDGTMRIKDDETE) are interacts with and activates NS3 protease. The helical intramembrane region spans 1444-1464 (TALLIVSGIFPYSIPATLLVW). Topologically, residues 1465-2146 (HTWQKQTQRS…VEELPETMET (682 aa)) are cytoplasmic. The region spanning 1474–1651 (SGVLWDVPSP…NAEPDGPTPE (178 aa)) is the Peptidase S7 domain. Residues histidine 1524, aspartate 1548, and serine 1608 each act as charge relay system; for serine protease NS3 activity in the active site. One can recognise a Helicase ATP-binding domain in the interval 1654–1810 (EEMFKKRNLT…QSNAPIQDEE (157 aa)). Residues 1658–1661 (KKRN) are important for RNA-binding. An ATP-binding site is contributed by 1667 to 1674 (LHPGSGKT). The short motif at 1758–1761 (DEAH) is the DEAH box element. The Helicase C-terminal domain occupies 1820-1986 (SGNEWITDFA…GIIPALFEPE (167 aa)). Residue lysine 1862 is modified to N6-acetyllysine; by host. The chain crosses the membrane as a helical span at residues 2147–2167 (LLLLGLMILLTGGAMLFLISG). Residues 2168–2169 (KG) lie on the Lumenal side of the membrane. Positions 2170 to 2190 (IGKTSIGLICVIASSGMLWMA) form an intramembrane region, helical. Position 2191 (glutamate 2191) is a topological domain, lumenal. The helical transmembrane segment at 2192 to 2212 (VPLQWIASAIVLEFFMMVLLI) threads the bilayer. Topologically, residues 2213–2227 (PEPEKQRTPQDNQLA) are cytoplasmic. Residues 2228 to 2248 (YVVIGILTLAATIAANEMGLL) traverse the membrane as a helical segment. Residues 2249-2273 (ETTKRDLGMSKEPGVVSPTSYLDVD) lie on the Lumenal side of the membrane. The helical intramembrane region spans 2274-2294 (LHPASAWTLYAVATTVITPML). The Lumenal portion of the chain corresponds to 2295-2305 (RHTIENSTANV). N-linked (GlcNAc...) asparagine; by host glycosylation is found at asparagine 2300 and asparagine 2304. An intramembrane region (helical) is located at residues 2306 to 2326 (SLAAIANQAVVLMGLDKGWPI). Topologically, residues 2327 to 2346 (SKMDLGVPLLALGCYSQVNP) are lumenal. A helical membrane pass occupies residues 2347-2367 (LTLTAAVLLLITHYAIIGPGL). The Cytoplasmic portion of the chain corresponds to 2368-2412 (QAKATREAQKRTAAGIMKNPTVDGIMTIDLDSVIFDSKFEKQLGQ). The helical transmembrane segment at 2413–2433 (VMLLVLCAVQLLLMRTSWALC) threads the bilayer. Topologically, residues 2434–2458 (EALTLATGPITTLWEGSPGKFWNTT) are lumenal. The N-linked (GlcNAc...) asparagine; by host glycan is linked to asparagine 2456. A helical membrane pass occupies residues 2459 to 2479 (IAVSMANIFRGSYLAGAGLAF). The Cytoplasmic segment spans residues 2480–3390 (SIMKSVGTGK…KEEESEGAIW (911 aa)). The 262-residue stretch at 2492-2753 (TGSQGETLGE…DVDLGAGTRH (262 aa)) folds into the mRNA cap 0-1 NS5-type MT domain. Serine 2546 contributes to the S-adenosyl-L-methionine binding site. Phosphoserine is present on serine 2546. Lysine 2551 functions as the For 2'-O-MTase activity in the catalytic mechanism. An SUMO-interacting motif motif is present at residues 2567-2570 (VIDL). S-adenosyl-L-methionine-binding residues include glycine 2576, tryptophan 2577, threonine 2594, lysine 2595, aspartate 2621, and valine 2622. Aspartate 2636 acts as the For 2'-O-MTase activity in catalysis. Isoleucine 2637 contributes to the S-adenosyl-L-methionine binding site. Residues lysine 2670 and glutamate 2706 each act as for 2'-O-MTase activity in the active site. Tyrosine 2708 provides a ligand contact to S-adenosyl-L-methionine. Positions 2927, 2931, 2936, and 2939 each coordinate Zn(2+). The RdRp catalytic domain maps to 3018 to 3168 (AMYADDTAGW…PIDDRFANAL (151 aa)). Zn(2+) contacts are provided by histidine 3202, cysteine 3218, and cysteine 3337.

It in the N-terminal section; belongs to the class I-like SAM-binding methyltransferase superfamily. mRNA cap 0-1 NS5-type methyltransferase family. Homodimer. Interacts (via N-terminus) with host EXOC1 (via C-terminus); this interaction results in EXOC1 degradation through the proteasome degradation pathway. As to quaternary structure, forms heterodimers with envelope protein E in the endoplasmic reticulum and Golgi. In terms of assembly, homodimer; in the endoplasmic reticulum and Golgi. Interacts with protein prM. Interacts with non-structural protein 1. Homodimer; Homohexamer when secreted. Interacts with envelope protein E. As to quaternary structure, interacts (via N-terminus) with serine protease NS3. In terms of assembly, forms a heterodimer with serine protease NS3. May form homooligomers. Forms a heterodimer with NS2B. Interacts with NS4B. Interacts with unphosphorylated RNA-directed RNA polymerase NS5; this interaction stimulates RNA-directed RNA polymerase NS5 guanylyltransferase activity. Interacts with host SHFL. As to quaternary structure, interacts with host MAVS; this interaction inhibits the synthesis of IFN-beta. Interacts with host SHFL. Interacts with host AUP1; the interaction occurs in the presence of Dengue virus NS4B and induces lipophagy which facilitates production of virus progeny particles. In terms of assembly, interacts with serine protease NS3. Homodimer. Interacts with host STAT2; this interaction inhibits the phosphorylation of the latter, and, when all viral proteins are present (polyprotein), targets STAT2 for degradation. Interacts with serine protease NS3. In terms of processing, specific enzymatic cleavages in vivo yield mature proteins. Cleavages in the lumen of endoplasmic reticulum are performed by host signal peptidase, whereas cleavages in the cytoplasmic side are performed by serine protease NS3. Signal cleavage at the 2K-4B site requires a prior NS3 protease-mediated cleavage at the 4A-2K site. Post-translationally, cleaved in post-Golgi vesicles by a host furin, releasing the mature small envelope protein M, and peptide pr. This cleavage is incomplete as up to 30% of viral particles still carry uncleaved prM. N-glycosylated. In terms of processing, N-glycosylated. The excreted form is glycosylated and this is required for efficient secretion of the protein from infected cells. Post-translationally, acetylated by host KAT5. Acetylation modulates NS3 RNA-binding and unwinding activities and plays an important positive role for viral replication. Sumoylation of RNA-directed RNA polymerase NS5 increases NS5 protein stability allowing proper viral RNA replication. In terms of processing, phosphorylated on serines residues. This phosphorylation may trigger NS5 nuclear localization.

It is found in the virion. It localises to the host nucleus. The protein localises to the host cytoplasm. The protein resides in the host perinuclear region. Its subcellular location is the secreted. It is found in the virion membrane. It localises to the host endoplasmic reticulum membrane. The protein localises to the host mitochondrion. The enzyme catalyses Selective hydrolysis of -Xaa-Xaa-|-Yaa- bonds in which each of the Xaa can be either Arg or Lys and Yaa can be either Ser or Ala.. The catalysed reaction is RNA(n) + a ribonucleoside 5'-triphosphate = RNA(n+1) + diphosphate. It carries out the reaction a ribonucleoside 5'-triphosphate + H2O = a ribonucleoside 5'-diphosphate + phosphate + H(+). It catalyses the reaction ATP + H2O = ADP + phosphate + H(+). The enzyme catalyses a 5'-end (5'-triphosphoguanosine)-ribonucleoside in mRNA + S-adenosyl-L-methionine = a 5'-end (N(7)-methyl 5'-triphosphoguanosine)-ribonucleoside in mRNA + S-adenosyl-L-homocysteine. The catalysed reaction is a 5'-end (N(7)-methyl 5'-triphosphoguanosine)-ribonucleoside in mRNA + S-adenosyl-L-methionine = a 5'-end (N(7)-methyl 5'-triphosphoguanosine)-(2'-O-methyl-ribonucleoside) in mRNA + S-adenosyl-L-homocysteine + H(+). Its function is as follows. Plays a role in virus budding by binding to the cell membrane and gathering the viral RNA into a nucleocapsid that forms the core of a mature virus particle. During virus entry, may induce genome penetration into the host cytoplasm after hemifusion induced by the surface proteins. Can migrate to the cell nucleus where it modulates host functions. Overcomes the anti-viral effects of host EXOC1 by sequestering and degrading the latter through the proteasome degradation pathway. Inhibits RNA silencing by interfering with host Dicer. Functionally, prevents premature fusion activity of envelope proteins in trans-Golgi by binding to envelope protein E at pH6.0. After virion release in extracellular space, gets dissociated from E dimers. In terms of biological role, acts as a chaperone for envelope protein E during intracellular virion assembly by masking and inactivating envelope protein E fusion peptide. prM is the only viral peptide matured by host furin in the trans-Golgi network probably to avoid catastrophic activation of the viral fusion activity in acidic Golgi compartment prior to virion release. prM-E cleavage is inefficient, and many virions are only partially matured. These uncleaved prM would play a role in immune evasion. Its function is as follows. May play a role in virus budding. Exerts cytotoxic effects by activating a mitochondrial apoptotic pathway through M ectodomain. May display a viroporin activity. Binds to host cell surface receptor and mediates fusion between viral and cellular membranes. Envelope protein is synthesized in the endoplasmic reticulum in the form of heterodimer with protein prM. They play a role in virion budding in the ER, and the newly formed immature particle is covered with 60 spikes composed of heterodimer between precursor prM and envelope protein E. The virion is transported to the Golgi apparatus where the low pH causes dissociation of PrM-E heterodimers and formation of E homodimers. prM-E cleavage is inefficient, and many virions are only partially matured. These uncleaved prM would play a role in immune evasion. Functionally, involved in immune evasion, pathogenesis and viral replication. Once cleaved off the polyprotein, is targeted to three destinations: the viral replication cycle, the plasma membrane and the extracellular compartment. Essential for viral replication. Required for formation of the replication complex and recruitment of other non-structural proteins to the ER-derived membrane structures. Excreted as a hexameric lipoparticle that plays a role against host immune response. Antagonizing the complement function. Binds to the host macrophages and dendritic cells. Inhibits signal transduction originating from Toll-like receptor 3 (TLR3). In terms of biological role, disrupts the host endothelial glycocalyx layer of host pulmonary microvascular endothelial cells, inducing degradation of sialic acid and shedding of heparan sulfate proteoglycans. NS1 induces expression of sialidases, heparanase, and activates cathepsin L, which activates heparanase via enzymatic cleavage. These effects are probably linked to the endothelial hyperpermeability observed in severe dengue disease. Its function is as follows. Component of the viral RNA replication complex that functions in virion assembly and antagonizes the host immune response. Required cofactor for the serine protease function of NS3. May have membrane-destabilizing activity and form viroporins. Functionally, displays three enzymatic activities: serine protease, NTPase and RNA helicase. NS3 serine protease, in association with NS2B, performs its autocleavage and cleaves the polyprotein at dibasic sites in the cytoplasm: C-prM, NS2A-NS2B, NS2B-NS3, NS3-NS4A, NS4A-2K and NS4B-NS5. NS3 RNA helicase binds RNA and unwinds dsRNA in the 3' to 5' direction. In terms of biological role, regulates the ATPase activity of the NS3 helicase activity. NS4A allows NS3 helicase to conserve energy during unwinding. Plays a role in the inhibition of the host innate immune response. Interacts with host MAVS and thereby prevents the interaction between RIGI and MAVS. In turn, IFN-beta production is impaired. Interacts with host AUP1 which mediates induction of lipophagy in host cells and facilitates production of virus progeny particles. Its function is as follows. Functions as a signal peptide for NS4B and is required for the interferon antagonism activity of the latter. Induces the formation of ER-derived membrane vesicles where the viral replication takes place. Inhibits interferon (IFN)-induced host STAT1 phosphorylation and nuclear translocation, thereby preventing the establishment of cellular antiviral state by blocking the IFN-alpha/beta pathway. Functionally, replicates the viral (+) and (-) RNA genome, and performs the capping of genomes in the cytoplasm. NS5 methylates viral RNA cap at guanine N-7 and ribose 2'-O positions. Besides its role in RNA genome replication, also prevents the establishment of cellular antiviral state by blocking the interferon-alpha/beta (IFN-alpha/beta) signaling pathway. Inhibits host TYK2 and STAT2 phosphorylation, thereby preventing activation of JAK-STAT signaling pathway. The sequence is that of Genome polyprotein (pol) from Dengue virus type 3 (strain Sri Lanka/1266/2000) (DENV-3).